An 863-amino-acid polypeptide reads, in one-letter code: Receptor-like protein 9DC3 (863 aa).

The N-terminal stretch at 1–21 (MGCVKLVFFMLYVFLFQLVSS) is a signal peptide. Residues 22–812 (SSLPHLCPED…EEDSPMISWQ (791 aa)) are Extracellular-facing. Residues 24-90 (LPHLCPEDQA…GVHCDETTGQ (67 aa)) form an N-cap region. Residues Asn71 and Asn108 are each glycosylated (N-linked (GlcNAc...) asparagine). The LRR 1; degenerate repeat unit spans residues 91 to 114 (VIALDLRCSQLQGKFHSNSSLFQL). LRR repeat units lie at residues 115–138 (SNLK…KFGE) and 140–163 (SDLT…ISHL). The LRR 4; degenerate repeat unit spans residues 164 to 190 (SKLHVLLIGDQYGLSIVPHNFEPLLKN). Residues Asn190, Asn203, and Asn211 are each glycosylated (N-linked (GlcNAc...) asparagine). 6 LRR repeats span residues 191–213 (LTQL…SNFS), 214–237 (SHLT…VFHL), 240–262 (LEFL…KWNS), 264–286 (ASLM…SFSH), 287–311 (LTSL…LWNL), and 312–336 (TNIE…IFEK). The N-linked (GlcNAc...) asparagine glycan is linked to Asn261. N-linked (GlcNAc...) asparagine glycosylation is found at Asn299 and Asn310. One copy of the LRR 11; degenerate repeat lies at 337-357 (LKKLSLFRNDNLDGGLEFLSF). LRR repeat units lie at residues 358 to 382 (NTQL…ISGL), 383 to 406 (QNLE…IFSL), 408 to 428 (SLVE…EFKS), 429 to 452 (KTLS…LLNQ), 454 to 476 (NLQL…ICNL), 477 to 500 (KTLI…VVER), 502 to 524 (EYLS…TFSV), 525 to 549 (GNIL…LINC), 551 to 572 (YLAL…WLGH), 573 to 597 (LSQL…GNTN), 599 to 623 (FTRL…ILGN), 667 to 690 (LDSN…IIGD), 691 to 714 (LVGL…SFQN), 715 to 739 (LSVL…LASL), and 741 to 759 (FLEV…IPKG). Residues Asn378, Asn396, and Asn416 are each glycosylated (N-linked (GlcNAc...) asparagine). The N-linked (GlcNAc...) asparagine glycan is linked to Asn464. Asn519 is a glycosylation site (N-linked (GlcNAc...) asparagine). Asn563 is a glycosylation site (N-linked (GlcNAc...) asparagine). N-linked (GlcNAc...) asparagine glycosylation is found at Asn674, Asn698, and Asn714. 2 N-linked (GlcNAc...) asparagine glycosylation sites follow: Asn746 and Asn767. Positions 760 to 812 (KQFDSFGNTSYQGNDGLCGFPLSKLCGGDDQVTTPAELDQEEEEEDSPMISWQ) are C-cap/acidic domain. A helical transmembrane segment spans residues 813–833 (GVLVGYGCGLVIGLSVIYIMW). The Cytoplasmic portion of the chain corresponds to 834 to 863 (STQYPAWFSRMHLKLEQIVTTRMKKHKKRY).

The protein belongs to the RLP family.

It is found in the cell membrane. Its function is as follows. Involved in plant defense. Confers resistance to the fungal pathogen C.fulvum through recognition of the AVR9 elicitor protein. In Solanum pimpinellifolium (Currant tomato), this protein is Receptor-like protein 9DC3.